The chain runs to 488 residues: Protein kinase C and casein kinase substrate in neurons 2 protein (488 aa).

The F-BAR domain occupies 11–282; it reads VEVSSDSFWE…SIKAADAVED (272 aa). Positions 25 to 274 form a coiled coil; it reads KRTVKRIDDG…GIYRELEQSI (250 aa). K53 carries the N6-acetyllysine modification. Over residues 163–176 the composition is skewed to basic and acidic residues; that stretch reads CKEEKLAVSREANS. Positions 163 to 183 are disordered; the sequence is CKEEKLAVSREANSKADPSLN. S273 bears the Phosphoserine mark. S315 carries the phosphoserine; by PKC modification. The tract at residues 316-429 is disordered; that stretch reads RREKKKAADG…PFDEDTTSGT (114 aa). Residues 329–364 show a composition bias toward polar residues; it reads TGINQTGDQSGQNKPSSNLSVPSNPAQSTQLQSSYN. The short motif at 364–366 is the NPF1 element; it reads NPF. S375 bears the Phosphoserine; by IKKB mark. The span at 386-396 shows a compositional bias: polar residues; the sequence is NVSSYEKTQNY. S401 carries the phosphoserine modification. Polar residues predominate over residues 406–418; it reads NNPFSSTDANGDS. Positions 407–409 match the NPF2 motif; the sequence is NPF. Residues 419 to 421 carry the NPF3 motif; the sequence is NPF. The 61-residue stretch at 428–488 folds into the SH3 domain; that stretch reads GTEVRVRALY…YPANYVEAIQ (61 aa). S448 carries the phosphoserine modification.

The protein belongs to the PACSIN family. As to quaternary structure, homodimer. May form heterooligomers with other PACSINs. Interacts (via NPF motifs) with EHD1 (via EH domain). Interacts with EHD3. Interacts (via the SH3 domain) with MICALL1. Interacts with RAC1. Interacts (via SH3 domain) with DNM1, SYN1, SYNJ1 and WASL. Interacts with CAV1. Interacts with TRPV4. Forms a complex with EHD4 and MICALL1; the complex controls CDH5 trafficking and coordinates angiogenesis. In terms of processing, phosphorylated by casein kinase 2 (CK2) and protein kinase C (PKC). Phosphorylation by PKC probably decreases the membrane binding and tubulation capacities of PACSIN2, thereby modulating the lifetime of caveolae. In terms of tissue distribution, widely expressed (at protein level). Isoforms 1/3 are predominantly expressed in heart and in PC-12 cells, a pheochromocytoma cell line (at protein level). Isoforms 2/4 are widely expressed with highest levels in muscle, testis and brain (at protein level).

Its subcellular location is the cytoplasm. It localises to the cytoskeleton. The protein resides in the cytoplasmic vesicle membrane. It is found in the cell projection. The protein localises to the ruffle membrane. Its subcellular location is the early endosome. It localises to the recycling endosome membrane. The protein resides in the cell membrane. It is found in the membrane. The protein localises to the caveola. Its subcellular location is the cell junction. It localises to the adherens junction. Its function is as follows. Regulates the morphogenesis and endocytosis of caveolae. Lipid-binding protein that is able to promote the tubulation of the phosphatidic acid-containing membranes it preferentially binds. Plays a role in intracellular vesicle-mediated transport. Involved in the endocytosis of cell-surface receptors like the EGF receptor, contributing to its internalization in the absence of EGF stimulus. Facilitates endothelial front-rear polarity during migration by recruiting EHD4 and MICALL1 to asymmetric adherens junctions between leader and follower cells. In Rattus norvegicus (Rat), this protein is Protein kinase C and casein kinase substrate in neurons 2 protein (Pacsin2).